The following is a 175-amino-acid chain: Shikimate kinase (175 aa).

Residue 14–19 coordinates ATP; the sequence is GAGKST. A Mg(2+)-binding site is contributed by Ser-18. Positions 36, 60, and 82 each coordinate substrate. Arg-120 contributes to the ATP binding site. Arg-140 serves as a coordination point for substrate. Position 157 (Gln-157) interacts with ATP.

The protein belongs to the shikimate kinase family. In terms of assembly, monomer. Requires Mg(2+) as cofactor.

It is found in the cytoplasm. It catalyses the reaction shikimate + ATP = 3-phosphoshikimate + ADP + H(+). It participates in metabolic intermediate biosynthesis; chorismate biosynthesis; chorismate from D-erythrose 4-phosphate and phosphoenolpyruvate: step 5/7. Catalyzes the specific phosphorylation of the 3-hydroxyl group of shikimic acid using ATP as a cosubstrate. This Histophilus somni (strain 2336) (Haemophilus somnus) protein is Shikimate kinase.